Consider the following 218-residue polypeptide: Glutathione S-transferase Mu 4 (218 aa).

The region spanning 2–88 is the GST N-terminal domain; the sequence is SMTLGYWDIR…YIARKHNLCG (87 aa). Glutathione contacts are provided by residues 7-8, 46-50, 59-60, and 72-73; these read YW, WLNEK, NL, and QS. Positions 90–208 constitute a GST C-terminal domain; the sequence is TEEEKIRVDI…KSSRFLPKPL (119 aa). Tyr116 is a binding site for substrate.

This sequence belongs to the GST superfamily. Mu family. In terms of assembly, homodimer. Expressed in a wide variety of tissues.

Its subcellular location is the cytoplasm. The catalysed reaction is RX + glutathione = an S-substituted glutathione + a halide anion + H(+). The enzyme catalyses 1-chloro-2,4-dinitrobenzene + glutathione = 2,4-dinitrophenyl-S-glutathione + chloride + H(+). It carries out the reaction (13S,14S)-epoxy-(4Z,7Z,9E,11E,16Z,19Z)-docosahexaenoate + glutathione = (13R)-S-glutathionyl-(14S)-hydroxy-(4Z,7Z,9E,11E,16Z,19Z)-docosahexaenoate. It catalyses the reaction leukotriene C4 = leukotriene A4 + glutathione. Its function is as follows. Conjugation of reduced glutathione to a wide number of exogenous and endogenous hydrophobic electrophiles. Catalyzes the conjugation of leukotriene A4 with reduced glutathione (GSH) to form leukotriene C4. Can also catalyze the transfer of a glutathionyl group from glutathione (GSH) to 13(S),14(S)-epoxy-docosahexaenoic acid to form maresin conjugate in tissue regeneration 1 (MCTR1), a bioactive lipid mediator that possess potent anti-inflammatory and proresolving actions. The protein is Glutathione S-transferase Mu 4 (GSTM4) of Homo sapiens (Human).